A 157-amino-acid chain; its full sequence is Ribosomal RNA large subunit methyltransferase H (157 aa).

Residues Leu73, Gly105, and 124–129 (MSKMTF) contribute to the S-adenosyl-L-methionine site.

This sequence belongs to the RNA methyltransferase RlmH family. Homodimer.

The protein resides in the cytoplasm. The enzyme catalyses pseudouridine(1915) in 23S rRNA + S-adenosyl-L-methionine = N(3)-methylpseudouridine(1915) in 23S rRNA + S-adenosyl-L-homocysteine + H(+). Functionally, specifically methylates the pseudouridine at position 1915 (m3Psi1915) in 23S rRNA. This Bacteroides fragilis (strain ATCC 25285 / DSM 2151 / CCUG 4856 / JCM 11019 / LMG 10263 / NCTC 9343 / Onslow / VPI 2553 / EN-2) protein is Ribosomal RNA large subunit methyltransferase H.